The chain runs to 350 residues: WD repeat-containing protein DWA2 (350 aa).

6 WD repeats span residues 39-79, 118-158, 166-205, 206-246, 250-290, and 311-350; these read KEEN…FDQR, AHVG…KSAE, GMRH…KNNS, IERA…FPVQ, GHTH…EHKT, and DYED…LPRR.

In terms of assembly, interacts with ABI5 and DDB1A and DWA1.

The protein localises to the nucleus. It functions in the pathway protein modification; protein ubiquitination. Component of the CUL4-RBX1-DDB1-DWA1/DWA2 E3 ubiquitin-protein ligase complex that acts as a negative regulator in abscisic acid (ABA) signaling. May function as the substrate recognition module within this complex leading to ABI5 degradation. Functionally redundant with DWA1. This is WD repeat-containing protein DWA2 (DWA2) from Arabidopsis thaliana (Mouse-ear cress).